Reading from the N-terminus, the 556-residue chain is Formate--tetrahydrofolate ligase (556 aa).

Residue 65-72 (TPAGEGKT) participates in ATP binding.

The protein belongs to the formate--tetrahydrofolate ligase family.

The catalysed reaction is (6S)-5,6,7,8-tetrahydrofolate + formate + ATP = (6R)-10-formyltetrahydrofolate + ADP + phosphate. It participates in one-carbon metabolism; tetrahydrofolate interconversion. The polypeptide is Formate--tetrahydrofolate ligase (Acetivibrio thermocellus (strain ATCC 27405 / DSM 1237 / JCM 9322 / NBRC 103400 / NCIMB 10682 / NRRL B-4536 / VPI 7372) (Clostridium thermocellum)).